A 417-amino-acid chain; its full sequence is Serine hydroxymethyltransferase (417 aa).

Residues Leu-121 and 125–127 (GHL) each bind (6S)-5,6,7,8-tetrahydrofolate. At Lys-229 the chain carries N6-(pyridoxal phosphate)lysine. Residue 355–357 (SPF) participates in (6S)-5,6,7,8-tetrahydrofolate binding.

It belongs to the SHMT family. In terms of assembly, homodimer. It depends on pyridoxal 5'-phosphate as a cofactor.

It is found in the cytoplasm. It carries out the reaction (6R)-5,10-methylene-5,6,7,8-tetrahydrofolate + glycine + H2O = (6S)-5,6,7,8-tetrahydrofolate + L-serine. It functions in the pathway one-carbon metabolism; tetrahydrofolate interconversion. Its pathway is amino-acid biosynthesis; glycine biosynthesis; glycine from L-serine: step 1/1. Functionally, catalyzes the reversible interconversion of serine and glycine with tetrahydrofolate (THF) serving as the one-carbon carrier. This reaction serves as the major source of one-carbon groups required for the biosynthesis of purines, thymidylate, methionine, and other important biomolecules. Also exhibits THF-independent aldolase activity toward beta-hydroxyamino acids, producing glycine and aldehydes, via a retro-aldol mechanism. The chain is Serine hydroxymethyltransferase from Shewanella sp. (strain W3-18-1).